Here is a 241-residue protein sequence, read N- to C-terminus: Tubulin-like protein alpha-4B (241 aa).

Over residues 1 to 10 the composition is skewed to basic and acidic residues; it reads MRHQQTERQD. Residues 1 to 20 form a disordered region; that stretch reads MRHQQTERQDPSQPLSRQHG. Position 10 (aspartate 10) interacts with GTP. Residue aspartate 10 participates in Mg(2+) binding. A compositionally biased stretch (polar residues) spans 11–20; sequence PSQPLSRQHG. The GTP site is built by serine 79, glycine 83, threonine 84, threonine 118, asparagine 145, and asparagine 167. Glutamate 193 is an active-site residue.

This sequence belongs to the tubulin family. The cofactor is Mg(2+). Post-translationally, some glutamate residues at the C-terminus are polyglutamylated, resulting in polyglutamate chains on the gamma-carboxyl group. Polyglutamylation plays a key role in microtubule severing by spastin (SPAST). SPAST preferentially recognizes and acts on microtubules decorated with short polyglutamate tails: severing activity by SPAST increases as the number of glutamates per tubulin rises from one to eight, but decreases beyond this glutamylation threshold. Glutamylation is also involved in cilia motility. Some glutamate residues at the C-terminus are monoglycylated but not polyglycylated due to the absence of functional TTLL10 in human. Monoglycylation is mainly limited to tubulin incorporated into cilia and flagella axonemes, which is required for their stability and maintenance. Flagella glycylation controls sperm motility. Both polyglutamylation and monoglycylation can coexist on the same protein on adjacent residues, and lowering glycylation levels increases polyglutamylation, and reciprocally.

The protein resides in the cytoplasm. The protein localises to the cytoskeleton. It carries out the reaction GTP + H2O = GDP + phosphate + H(+). Its function is as follows. Tubulin is the major constituent of microtubules, a cylinder consisting of laterally associated linear protofilaments composed ofalpha- and beta-tubulin heterodimers. This Homo sapiens (Human) protein is Tubulin-like protein alpha-4B (TUBA4B).